The primary structure comprises 650 residues: FAS-associated factor 1 (650 aa).

One can recognise a UBA domain in the interval 1-57; sequence MASNMDREMILADFQACTGIENIDEAITLLEQNNWDLVAAINGVIPQENGILQSEYG. Residues 62 to 87 form a disordered region; that stretch reads PGPAFNPASHPASAPTSSSSSAFRPV. Over residues 68–83 the composition is skewed to low complexity; sequence PASHPASAPTSSSSSA. Position 320 is a phosphoserine (Ser320). Residues 569–646 form the UBX domain; that stretch reads NAEPVSKLRI…KLFPQETLFL (78 aa). Thr580 bears the Phosphothreonine mark. The residue at position 582 (Ser582) is a Phosphoserine.

As to quaternary structure, interacts with CDT1 and ATPase VCP/p97. Interacts (via UBA domain) with FAS (via death domain). Interacts (via UBA domain) with NLRP12 (via DAPIN/PYRIN domain). In terms of tissue distribution, most abundant in testis, slightly less abundant in skeletal muscle and heart, followed by prostate, thymus, ovary, small intestine, and colon. Not detected in the peripheral blood leukocytes.

The protein localises to the nucleus. Its function is as follows. Ubiquitin-binding protein. Required for the progression of DNA replication forks by targeting DNA replication licensing factor CDT1 for degradation. Potentiates but cannot initiate FAS-induced apoptosis. This is FAS-associated factor 1 (FAF1) from Homo sapiens (Human).